Here is a 250-residue protein sequence, read N- to C-terminus: MEHSSASVPAALPYYVAFSQLLGLTVVAVTGAWLGLYRGGIAWESSLQFNVHPLCMVIGMIFLQGDALLVYRVFRREAKRTTKILHGLLHVFAFIIALVGLVAVFDYHKKKGYADLYSLHSWCGILVFVLYFVQWLVGFSFFLFPGASFSLRSRYRPQHIFFGATIFLFSVGTALLGLKEALLFKLGSKYSTFEPEGVLANVLGLLLVCFGVVVLYILAQADWKRPSQAEEQALSMDFKTLTEGDSPSPQ.

M1 carries the post-translational modification N-acetylmethionine. At 1–15 (MEHSSASVPAALPYY) the chain is on the cytoplasmic side. Residues 16 to 36 (VAFSQLLGLTVVAVTGAWLGL) form a helical membrane-spanning segment. One can recognise a Cytochrome b561 domain in the interval 18 to 219 (FSQLLGLTVV…FGVVVLYILA (202 aa)). Residues 37–50 (YRGGIAWESSLQFN) lie on the Vesicular side of the membrane. A helical transmembrane segment spans residues 51-71 (VHPLCMVIGMIFLQGDALLVY). Residues H52, R72, and K79 each contribute to the heme b site. Residues 72–83 (RVFRREAKRTTK) are Cytoplasmic-facing. L-ascorbate contacts are provided by K79 and K83. Residues 84-104 (ILHGLLHVFAFIIALVGLVAV) traverse the membrane as a helical segment. Residues H86, 115–118 (DLYS), and H120 contribute to the heme b site. The Vesicular segment spans residues 105 to 123 (FDYHKKKGYADLYSLHSWC). The chain crosses the membrane as a helical span at residues 124-144 (GILVFVLYFVQWLVGFSFFLF). At 145-157 (PGASFSLRSRYRP) the chain is on the cytoplasmic side. R152 lines the L-ascorbate pocket. A helical transmembrane segment spans residues 158–178 (QHIFFGATIFLFSVGTALLGL). The heme b site is built by H159 and E180. The Vesicular portion of the chain corresponds to 179 to 197 (KEALLFKLGSKYSTFEPEG). The helical transmembrane segment at 198 to 218 (VLANVLGLLLVCFGVVVLYIL) threads the bilayer. The Cytoplasmic portion of the chain corresponds to 219 to 250 (AQADWKRPSQAEEQALSMDFKTLTEGDSPSPQ). A heme b-binding site is contributed by K224. Phosphoserine occurs at positions 246 and 248.

The cofactor is heme b. Abundantly distributed in a number of neuroendocrine tissues.

It is found in the cytoplasmic vesicle. The protein resides in the secretory vesicle. It localises to the chromaffin granule membrane. It carries out the reaction monodehydro-L-ascorbate radical(out) + L-ascorbate(in) = monodehydro-L-ascorbate radical(in) + L-ascorbate(out). Transmembrane reductase that uses ascorbate as an electron donor in the cytoplasm and transfers electrons across membranes to reduce monodehydro-L-ascorbate radical in the lumen of secretory vesicles. It is therefore involved the regeneration and homeostasis within secretory vesicles of ascorbate which in turn provides reducing equivalents needed to support the activity of intravesicular enzymes. In Mus musculus (Mouse), this protein is Transmembrane ascorbate-dependent reductase CYB561.